We begin with the raw amino-acid sequence, 73 residues long: UPF0270 protein PMI2817 (73 aa).

This sequence belongs to the UPF0270 family.

This chain is UPF0270 protein PMI2817, found in Proteus mirabilis (strain HI4320).